The following is a 183-amino-acid chain: Holliday junction branch migration complex subunit RuvA (183 aa).

A domain I region spans residues 1 to 63 (MTVGLIGVVE…EDAHLLYGFL (63 aa)). The tract at residues 64–141 (EESEKILFER…IQDETKPVHN (78 aa)) is domain II. N141 is a region of interest (flexible linker). The interval 141–183 (NEAFLALESLGFKSAEINPILKKLKPNLSVEEAIKEALQQLRS) is domain III.

Belongs to the RuvA family. Homotetramer. Forms an RuvA(8)-RuvB(12)-Holliday junction (HJ) complex. HJ DNA is sandwiched between 2 RuvA tetramers; dsDNA enters through RuvA and exits via RuvB. An RuvB hexamer assembles on each DNA strand where it exits the tetramer. Each RuvB hexamer is contacted by two RuvA subunits (via domain III) on 2 adjacent RuvB subunits; this complex drives branch migration. In the full resolvosome a probable DNA-RuvA(4)-RuvB(12)-RuvC(2) complex forms which resolves the HJ.

It is found in the cytoplasm. Its function is as follows. The RuvA-RuvB-RuvC complex processes Holliday junction (HJ) DNA during genetic recombination and DNA repair, while the RuvA-RuvB complex plays an important role in the rescue of blocked DNA replication forks via replication fork reversal (RFR). RuvA specifically binds to HJ cruciform DNA, conferring on it an open structure. The RuvB hexamer acts as an ATP-dependent pump, pulling dsDNA into and through the RuvAB complex. HJ branch migration allows RuvC to scan DNA until it finds its consensus sequence, where it cleaves and resolves the cruciform DNA. In Helicobacter acinonychis (strain Sheeba), this protein is Holliday junction branch migration complex subunit RuvA.